A 483-amino-acid chain; its full sequence is Protein disulfide-isomerase 5-3 (483 aa).

3 N-linked (GlcNAc...) asparagine glycosylation sites follow: Asn-53, Asn-74, and Asn-99. Positions 133–263 constitute a Thioredoxin domain; that stretch reads EETKEEFPDG…IVKMVEGLVA (131 aa). Cys-170 functions as the Nucleophile in the catalytic mechanism. 3 N-linked (GlcNAc...) asparagine glycosylation sites follow: Asn-279, Asn-326, and Asn-376. The helical transmembrane segment at 442 to 462 threads the bilayer; sequence FSHFITNLCAIIGGVFTVAGI.

Belongs to the protein disulfide isomerase family. Widely expressed.

The protein resides in the membrane. Functionally, acts as a protein-folding catalyst that interacts with nascent polypeptides to catalyze the formation, isomerization, and reduction or oxidation of disulfide bonds. The sequence is that of Protein disulfide-isomerase 5-3 (PDIL5-3) from Arabidopsis thaliana (Mouse-ear cress).